A 556-amino-acid chain; its full sequence is Testis-specific protein 10-interacting protein (556 aa).

Positions 1–20 (MGQETNMLNAHQQLVRTSSG) are enriched in polar residues. 2 disordered regions span residues 1–102 (MGQE…SPRK) and 180–320 (CTSI…GPWD). The span at 75–85 (KDRRLRGRNKK) shows a compositional bias: basic residues. Acidic residues-rich tracts occupy residues 213–225 (EPEE…LGAE) and 246–260 (LEEE…EAED). Basic residues predominate over residues 266 to 278 (PWRRRTSSRRKGR). The segment covering 304–320 (EPQRRKPRAKELEGPWD) has biased composition (basic and acidic residues). A coiled-coil region spans residues 387–463 (LRAWELQQRE…ELQGIQHRVQ (77 aa)). Residues 503–556 (AGKRDMEGAPRRHRSHRSVGARMEPSSQSPPKMEPTGSQADQHFAPNPDQELSP) form a disordered region. A compositionally biased stretch (polar residues) spans 527–543 (PSSQSPPKMEPTGSQAD).

The polypeptide is Testis-specific protein 10-interacting protein (TSGA10IP) (Bos taurus (Bovine)).